Consider the following 433-residue polypeptide: ATP-dependent protease ATPase subunit HslU (433 aa).

ATP contacts are provided by residues Val-18, 60–65 (GVGKTE), Asp-246, Glu-311, and Arg-383.

It belongs to the ClpX chaperone family. HslU subfamily. In terms of assembly, a double ring-shaped homohexamer of HslV is capped on each side by a ring-shaped HslU homohexamer. The assembly of the HslU/HslV complex is dependent on binding of ATP.

Its subcellular location is the cytoplasm. ATPase subunit of a proteasome-like degradation complex; this subunit has chaperone activity. The binding of ATP and its subsequent hydrolysis by HslU are essential for unfolding of protein substrates subsequently hydrolyzed by HslV. HslU recognizes the N-terminal part of its protein substrates and unfolds these before they are guided to HslV for hydrolysis. In Rhodopseudomonas palustris (strain HaA2), this protein is ATP-dependent protease ATPase subunit HslU.